The following is a 417-amino-acid chain: Phosphoglycerate kinase (417 aa).

(2R)-3-phosphoglycerate-binding residues include Val23, Asp24, Phe25, Asn26, Gln39, Arg40, Ser63, His64, Gly66, Arg67, Leu122, Arg123, His170, and Arg171. Gly214 provides a ligand contact to ADP. Gly214 contacts CDP. Ala215 and Lys216 together coordinate AMP. Position 215 (Ala215) interacts with ATP. Ala215 lines the Mg(2+) pocket. Asp219 provides a ligand contact to CDP. Asp219 contributes to the Mg(2+) binding site. Lys220 lines the AMP pocket. ATP is bound at residue Lys220. Residue Gly238 coordinates ADP. Gly238 is a binding site for CDP. Gly239 and Gly313 together coordinate AMP. 2 residues coordinate ATP: Gly239 and Gly313. Residues Gly338 and Phe343 each coordinate CDP. Phe343 lines the ADP pocket. AMP is bound at residue Glu344. Positions 344, 375, and 376 each coordinate ATP. Asp375 is a Mg(2+) binding site.

It belongs to the phosphoglycerate kinase family. As to quaternary structure, monomer. It depends on Mg(2+) as a cofactor.

The protein resides in the cytoplasm. The protein localises to the mitochondrion. It carries out the reaction (2R)-3-phosphoglycerate + ATP = (2R)-3-phospho-glyceroyl phosphate + ADP. It functions in the pathway carbohydrate degradation; glycolysis; pyruvate from D-glyceraldehyde 3-phosphate: step 2/5. In terms of biological role, catalyzes one of the two ATP producing reactions in the glycolytic pathway via the reversible conversion of 1,3-diphosphoglycerate to 3-phosphoglycerate. Both L- and D- forms of purine and pyrimidine nucleotides can be used as substrates, but the activity is much lower on pyrimidines. Negatively regulates the biosynthesis of acetyl-CoA from pyruvate in the mitochondrion. This is Phosphoglycerate kinase (PGKA) from Penicillium citrinum.